A 308-amino-acid polypeptide reads, in one-letter code: Methionyl-tRNA formyltransferase (308 aa).

Position 110 to 113 (serine 110 to proline 113) interacts with (6S)-5,6,7,8-tetrahydrofolate.

This sequence belongs to the Fmt family.

The enzyme catalyses L-methionyl-tRNA(fMet) + (6R)-10-formyltetrahydrofolate = N-formyl-L-methionyl-tRNA(fMet) + (6S)-5,6,7,8-tetrahydrofolate + H(+). Functionally, attaches a formyl group to the free amino group of methionyl-tRNA(fMet). The formyl group appears to play a dual role in the initiator identity of N-formylmethionyl-tRNA by promoting its recognition by IF2 and preventing the misappropriation of this tRNA by the elongation apparatus. The sequence is that of Methionyl-tRNA formyltransferase from Neisseria meningitidis serogroup C / serotype 2a (strain ATCC 700532 / DSM 15464 / FAM18).